We begin with the raw amino-acid sequence, 432 residues long: 7-dehydrocholesterol reductase (432 aa).

A run of 9 helical transmembrane segments spans residues 12–34 (YASMLSLLAFCPPFVILLWYTMV), 64–86 (LIAWKIIFCYGAFEAILQLLLPG), 107–126 (LAAYFVTLATYLGLWWFGIF), 136–155 (GEIFSALIFGSFIFCVLLYI), 195–212 (FTNCRFGMMSWAVLAVTY), 227–249 (MLVNTILMLVYVTKFFWWEAGYW), 261–283 (FYICWGCLVWVPSVYTSPGMYLV), 287–309 (VELGTQLAIYILVAGILCIYINY), and 371–393 (SAFFWTVPALFDNFLAYFYVIFL).

This sequence belongs to the ERG4/ERG24 family.

The protein resides in the endoplasmic reticulum membrane. It catalyses the reaction cholesterol + NADP(+) = 7-dehydrocholesterol + NADPH + H(+). Its pathway is lipid metabolism; steroid biosynthesis. Its function is as follows. Production of cholesterol by reduction of C7-C8 double bond of 7-dehydrocholesterol (7-DHC). Lesions in the gene coding for the enzyme cause dwarfism. This Arabidopsis thaliana (Mouse-ear cress) protein is 7-dehydrocholesterol reductase (DWF5).